The chain runs to 256 residues: Dihydromonacolin L-[lovastatin nonaketide synthase] thioesterase (256 aa).

Catalysis depends on charge relay system residues serine 122, aspartate 201, and histidine 229.

Belongs to the LovG family.

The enzyme catalyses dihydromonacolin L-[lovastatin nonaketide synthase] + H2O = holo-[lovastatin nonaketide synthase] + dihydromonacolin L carboxylate + H(+). It participates in polyketide biosynthesis; lovastatin biosynthesis. Functionally, esterase; part of the gene cluster that mediates the biosynthesis of lovastatin (also known as mevinolin, mevacor or monacolin K), a hypolipidemic inhibitor of (3S)-hydroxymethylglutaryl-coenzyme A (HMG-CoA) reductase (HMGR). The first step in the biosynthesis of lovastatin is the production of dihydromonacolin L acid by the lovastatin nonaketide synthase lovB and the trans-acting enoyl reductase lovC via condensation of one acetyl-CoA unit and 8 malonyl-CoA units. Dihydromonacolin L acid is released from lovB by the thioesterase lovG. Next, dihydromonacolin L acid is oxidized by the dihydromonacolin L monooxygenase lovA twice to form monacolin J acid. The 2-methylbutyrate moiety of lovastatin is synthesized by the lovastatin diketide synthase lovF via condensation of one acetyl-CoA unit and one malonyl-CoA unit. Finally, the covalent attachment of this moiety to monacolin J acid is catalyzed by the transesterase lovD to yield lovastatin. LovD has broad substrate specificity and can also convert monacolin J to simvastatin using alpha-dimethylbutanoyl-S-methyl-3-mercaptopropionate (DMB-S-MMP) as the thioester acyl donor, and can also catalyze the reverse reaction and function as hydrolase in vitro. LovD has much higher activity with LovF-bound 2-methylbutanoate than with free diketide substrates. In terms of biological role, esterase that catalyzes the release of covalently bound dihydromonacolin L from LovB during lovastatin biosynthesis. The protein is Dihydromonacolin L-[lovastatin nonaketide synthase] thioesterase of Aspergillus terreus.